Consider the following 120-residue polypeptide: Large ribosomal subunit protein bL19 (120 aa).

It belongs to the bacterial ribosomal protein bL19 family.

This protein is located at the 30S-50S ribosomal subunit interface and may play a role in the structure and function of the aminoacyl-tRNA binding site. The chain is Large ribosomal subunit protein bL19 from Chlorobium luteolum (strain DSM 273 / BCRC 81028 / 2530) (Pelodictyon luteolum).